The chain runs to 154 residues: Superoxide dismutase [Cu-Zn] (154 aa).

Residues histidine 47, histidine 49, and histidine 64 each contribute to the Cu cation site. A disulfide bridge links cysteine 58 with cysteine 147. Zn(2+)-binding residues include histidine 64, histidine 72, histidine 81, and aspartate 84. Histidine 121 contributes to the Cu cation binding site. Arginine 144 provides a ligand contact to substrate.

Belongs to the Cu-Zn superoxide dismutase family. As to quaternary structure, homodimer. Requires Cu cation as cofactor. Zn(2+) serves as cofactor.

The protein resides in the cytoplasm. Its subcellular location is the mitochondrion. It is found in the cell membrane. The enzyme catalyses 2 superoxide + 2 H(+) = H2O2 + O2. Its function is as follows. Destroys radicals which are normally produced within the cells and which are toxic to biological systems. Destroys radicals produced by host defense mechanisms. The protein is Superoxide dismutase [Cu-Zn] of Cryptococcus neoformans var. grubii serotype A (strain H99 / ATCC 208821 / CBS 10515 / FGSC 9487) (Filobasidiella neoformans var. grubii).